Consider the following 280-residue polypeptide: MVFKFPTPPGTQKKAGTTATKPAPKATTKKVATSTGTRSGGVGYRKYQGDALWLPNTTRPEWLDGSLPGDRGFDPLGLSKPSEFVVIGVDENDQNAAKNNKGSVEAIVQATPDEVSSENRLAPYSEVFGLARFRECELIHGRWAMLACLGALVAEATTGVSWVEAGKVELDGASYAGLSLPFSITQLIWIEVILVGGAEFYRNSETNPEKRCYPGGVFDPLKLASEDEERAFRLKTAEIKHARLAMVSFFGYGVQALSTGEGALGSLAKFADGLNNGKGL.

The segment at 1-42 (MVFKFPTPPGTQKKAGTTATKPAPKATTKKVATSTGTRSGGV) is disordered. V2 carries the post-translational modification N-acetylvaline. At T7 the chain carries Phosphothreonine; in State 1 and State 2. Residues 10-37 (GTQKKAGTTATKPAPKATTKKVATSTGT) show a composition bias toward low complexity. T17 bears the Phosphothreonine; in State 2 mark. T33 is subject to Phosphothreonine; in State 1 and State 2. Y47 contacts chlorophyll b. 2 residues coordinate chlorophyll a: F73 and S79. Position 103 is a phosphoserine; in State 2 (S103). The chlorophyll a site is built by E137 and H140. Transmembrane regions (helical) follow at residues 143–163 (WAML…VSWV) and 176–196 (AGLS…ILVG). Positions 183, 199, and 202 each coordinate chlorophyll b. 4 residues coordinate chlorophyll a: E238, H241, R243, and Q255. A helical membrane pass occupies residues 244–264 (LAMVSFFGYGVQALSTGEGAL).

Belongs to the light-harvesting chlorophyll a/b-binding (LHC) protein family. In terms of assembly, the LHC complex consists of chlorophyll a-b binding proteins. Binds at least 14 chlorophylls (8 Chl-a and 6 Chl-b) and carotenoids such as lutein and neoxanthin. serves as cofactor. Reversible phosphorylation plays a role in the State transition process and determines the affinity of LHCII for PSI and PSII.

The protein localises to the plastid. The protein resides in the chloroplast thylakoid membrane. Its function is as follows. The light-harvesting complex (LHC) functions as a light receptor, it captures and delivers excitation energy to photosystems with which it is closely associated. CP29 facilitates the State 1 to State 2 transition, where State I is induced by excess photosystem I (PSI) light and State 2 is induced by excess photosystem II (PSII) light. This chain is Chlorophyll a-b binding protein CP29, found in Chlamydomonas reinhardtii (Chlamydomonas smithii).